The chain runs to 322 residues: 6-deoxy-6-sulfo-D-fructose transketolase subunit SqwH (322 aa).

The protein belongs to the transketolase family. In terms of assembly, forms a complex with SqwG. The cofactor is thiamine diphosphate.

The catalysed reaction is 6-deoxy-6-sulfo-D-fructose + D-glyceraldehyde 3-phosphate = 4-deoxy-4-sulfo-D-erythrose + D-xylulose 5-phosphate. It carries out the reaction 4-deoxy-4-sulfo-D-erythrulose + D-glyceraldehyde 3-phosphate = sulfoacetaldehyde + D-xylulose 5-phosphate. Its function is as follows. Part of the sulfo-TK pathway, a D-sulfoquinovose degradation pathway that produces 2-hydroxyethane-1-sulfonate (isethionate). Catalyzes two steps of the pathway: the formation of 4-deoxy-4-sulfoerythrose (SE) and xylulose 5-phosphate from 6-deoxy-6-sulfo-D-fructose (SF) and glyceraldehyde 3-phosphate, and the formation of sulfoacetaldehyde (SA) and xylulose 5-phosphate from 4-deoxy-4-sulfo-D-erythrulose (SEu) and glyceraldehyde 3-phosphate. The polypeptide is 6-deoxy-6-sulfo-D-fructose transketolase subunit SqwH (Clostridium sp. (strain MSTE9)).